The sequence spans 560 residues: Secreted RxLR effector protein 142 (560 aa).

A signal peptide spans 1 to 22 (MRRAYFVAIALLVAAGGKTAAG). Disordered regions lie at residues 48 to 73 (QSQNLQESRDPKDDLKLSAGNEERTP) and 354 to 377 (INRPAPSGPSTNGATTSNGGLNNQ). Residues 54–72 (ESRDPKDDLKLSAGNEERT) show a composition bias toward basic and acidic residues. Positions 56–71 (RDPKDDLKLSAGNEER) match the RxLR-dEER motif. Residues 361-377 (GPSTNGATTSNGGLNNQ) are compositionally biased toward polar residues.

It belongs to the RxLR effector family.

It localises to the secreted. It is found in the host nucleus. In terms of biological role, secreted effector that completely suppresses the host cell death induced by cell death-inducing proteins. This Plasmopara viticola (Downy mildew of grapevine) protein is Secreted RxLR effector protein 142.